The sequence spans 526 residues: Peptide chain release factor 3 (526 aa).

Positions 8–277 (DKRRTFAIIS…GLTQWAPKPQ (270 aa)) constitute a tr-type G domain. Residues 17–24 (SHPDAGKT), 85–89 (DTPGH), and 139–142 (NKLD) contribute to the GTP site.

The protein belongs to the TRAFAC class translation factor GTPase superfamily. Classic translation factor GTPase family. PrfC subfamily.

It localises to the cytoplasm. Its function is as follows. Increases the formation of ribosomal termination complexes and stimulates activities of RF-1 and RF-2. It binds guanine nucleotides and has strong preference for UGA stop codons. It may interact directly with the ribosome. The stimulation of RF-1 and RF-2 is significantly reduced by GTP and GDP, but not by GMP. In Actinobacillus succinogenes (strain ATCC 55618 / DSM 22257 / CCUG 43843 / 130Z), this protein is Peptide chain release factor 3.